The primary structure comprises 277 residues: Carbonyl reductase [NADPH] 1 (277 aa).

Ser-2 is modified (N-acetylserine). Phosphoserine occurs at positions 2 and 30. NADP(+)-binding positions include 10–34 (VTGGNKGIGLAIVRDLCRLFSGDVV), 63–64 (DI), and Asn-90. Residues 95–97 (FKV) and Gln-106 each bind glutathione. Position 140 (Ser-140) interacts with substrate. 193–194 (AY) contributes to the glutathione binding site. The active-site Proton acceptor is the Tyr-194. Residues 194-198 (YGVTK) and 231-233 (VRT) each bind NADP(+). Lys-239 is subject to N6-1-carboxyethyl lysine.

Belongs to the short-chain dehydrogenases/reductases (SDR) family. As to quaternary structure, monomer. Expressed in kidney (at protein level).

The protein resides in the cytoplasm. The enzyme catalyses a secondary alcohol + NADP(+) = a ketone + NADPH + H(+). It carries out the reaction a primary alcohol + NADP(+) = an aldehyde + NADPH + H(+). The catalysed reaction is prostaglandin F2alpha + NADP(+) = prostaglandin E2 + NADPH + H(+). It catalyses the reaction prostaglandin E1 + NADP(+) = 15-oxoprostaglandin E1 + NADPH + H(+). The enzyme catalyses menadione + NADPH + H(+) = menadiol + NADP(+). It carries out the reaction prostaglandin D2 + NADP(+) = 15-oxoprostaglandin D2 + NADPH + H(+). The catalysed reaction is prostaglandin E2 + NADP(+) = 15-oxoprostaglandin E2 + NADPH + H(+). It catalyses the reaction prostaglandin F2alpha + NADP(+) = 15-oxoprostaglandin F2alpha + NADPH + H(+). The enzyme catalyses daunorubicin + NADPH + H(+) = 13-dihydrodaunorubicin + NADP(+). It carries out the reaction S-nitrosoglutathione + NADPH + H(+) = S-(hydroxysulfenamide)glutathione + NADP(+). The catalysed reaction is cortisol + NADPH + H(+) = 20beta-dihydrocortisol + NADP(+). It catalyses the reaction corticosterone + NADPH + H(+) = 20beta-dihydrocorticosterone + NADP(+). Inhibited by quercetin, rutenin and its derivatives. Functionally, NADPH-dependent reductase with broad substrate specificity. Catalyzes the reduction of a wide variety of carbonyl compounds including quinones, prostaglandins, menadione, plus various xenobiotics. Catalyzes the reduction of the antitumor anthracyclines doxorubicin and daunorubicin to the cardiotoxic compounds doxorubicinol and daunorubicinol. Can convert prostaglandin E to prostaglandin F2-alpha. Can bind glutathione, which explains its higher affinity for glutathione-conjugated substrates. Catalyzes the reduction of S-nitrosoglutathione. In addition, participates in the glucocorticoid metabolism by catalyzing the NADPH-dependent cortisol/corticosterone into 20beta-dihydrocortisol (20b-DHF) or 20beta-corticosterone (20b-DHB), which are weak agonists of NR3C1 and NR3C2 in adipose tissue. This Homo sapiens (Human) protein is Carbonyl reductase [NADPH] 1.